The chain runs to 556 residues: 2-isopropylmalate synthase (556 aa).

A Pyruvate carboxyltransferase domain is found at 33–307 (PIWCSSDLRD…HPQLDFSDID (275 aa)). Mg(2+) contacts are provided by aspartate 42, histidine 246, histidine 248, and asparagine 282. The segment at 439 to 556 (ATSPYALASH…AVTQAEAKAA (118 aa)) is regulatory domain.

Belongs to the alpha-IPM synthase/homocitrate synthase family. LeuA type 2 subfamily. Homodimer. The cofactor is Mg(2+).

The protein localises to the cytoplasm. The catalysed reaction is 3-methyl-2-oxobutanoate + acetyl-CoA + H2O = (2S)-2-isopropylmalate + CoA + H(+). It functions in the pathway amino-acid biosynthesis; L-leucine biosynthesis; L-leucine from 3-methyl-2-oxobutanoate: step 1/4. In terms of biological role, catalyzes the condensation of the acetyl group of acetyl-CoA with 3-methyl-2-oxobutanoate (2-ketoisovalerate) to form 3-carboxy-3-hydroxy-4-methylpentanoate (2-isopropylmalate). This chain is 2-isopropylmalate synthase, found in Pseudomonas paraeruginosa (strain DSM 24068 / PA7) (Pseudomonas aeruginosa (strain PA7)).